We begin with the raw amino-acid sequence, 350 residues long: Heat-inducible transcription repressor HrcA (350 aa).

Belongs to the HrcA family.

Its function is as follows. Negative regulator of class I heat shock genes (grpE-dnaK-dnaJ and groELS operons). Prevents heat-shock induction of these operons. In Limosilactobacillus reuteri (strain DSM 20016) (Lactobacillus reuteri), this protein is Heat-inducible transcription repressor HrcA.